The chain runs to 150 residues: MSHLVHLTVLLLVGILCLGATSAKPHEEINRDHAAELANECKAETGATDEDVEQLMSHDLPERHEAKCLRACVMKKLQIMDESGKLNKEHAIELVKVMSKHDAEKEDAPAEVVAKCEAIETPEDHCDAAFAYEECIYEQMKEHGLELEEH.

The first 23 residues, 1–23 (MSHLVHLTVLLLVGILCLGATSA), serve as a signal peptide directing secretion. 3 disulfide bridges follow: Cys41–Cys72, Cys68–Cys126, and Cys116–Cys135.

The protein belongs to the PBP/GOBP family. In terms of tissue distribution, expressed in the antenna, mostly on the anterior surface of the third antennal segment. Also detected in the maxillary palps and in cells at the bases of the taste hairs on the proboscis and internal taste organs of the head.

The protein resides in the secreted. The chain is General odorant-binding protein 19d (Obp19d) from Drosophila melanogaster (Fruit fly).